Reading from the N-terminus, the 192-residue chain is Fe/S biogenesis protein NfuA (192 aa).

[4Fe-4S] cluster-binding residues include Cys-149 and Cys-152.

The protein belongs to the NfuA family. Homodimer. [4Fe-4S] cluster serves as cofactor.

Functionally, involved in iron-sulfur cluster biogenesis. Binds a 4Fe-4S cluster, can transfer this cluster to apoproteins, and thereby intervenes in the maturation of Fe/S proteins. Could also act as a scaffold/chaperone for damaged Fe/S proteins. This Shewanella sp. (strain MR-7) protein is Fe/S biogenesis protein NfuA.